The primary structure comprises 203 residues: Akirin-2 (203 aa).

Phosphoserine is present on residues Ser18 and Ser21. The Nuclear localization signal motif lies at 22-27 (PKRRRC). The residue at position 57 (Ser57) is a Phosphoserine. Residues 115-137 (PHAFLLSGPASPGTPSGTSSPLK) are disordered. The segment covering 119–135 (LLSGPASPGTPSGTSSP) has biased composition (low complexity). Positions 200–203 (SYVS) match the SYVS motif motif.

The protein belongs to the akirin family. As to quaternary structure, homodimer. Interacts with IPO9; the interaction is direct. Associates with 20S and 26S proteasomes. Interacts with SMARCD1; promoting SWI/SNF complex recruitment. Interacts with NFKBIZ. Interacts with YWHAB. Post-translationally, polyubiquitinated. Polyubiquitination is dependent of UBR5 that extends pre-ubiquitinated AKIRIN2.

Its subcellular location is the nucleus. It is found in the cytoplasm. The protein localises to the membrane. Functionally, molecular adapter that acts as a bridge between a variety of multiprotein complexes, and which is involved in embryonic development, immunity, myogenesis and brain development. Plays a key role in nuclear protein degradation by promoting import of proteasomes into the nucleus: directly binds to fully assembled 20S proteasomes at one end and to nuclear import receptor IPO9 at the other end, bridging them together and mediating the import of pre-assembled proteasome complexes through the nuclear pore. Involved in innate immunity by regulating the production of interleukin-6 (IL6) downstream of Toll-like receptor (TLR): acts by bridging the NF-kappa-B inhibitor NFKBIZ and the SWI/SNF complex, leading to promote induction of IL6. Also involved in adaptive immunity by promoting B-cell activation. Involved in brain development: required for the survival and proliferation of cerebral cortical progenitor cells. Involved in myogenesis: required for skeletal muscle formation and skeletal development, possibly by regulating expression of muscle differentiation factors. The sequence is that of Akirin-2 from Bos taurus (Bovine).